Consider the following 277-residue polypeptide: MALKHFNPITPGQRQLVIVDRSELYKGKPVKSLTEGLSKKGGRNNTGRITVRFQGGGHKRSYRFIDFKRRKLDVVGTVERLEYDPNRTAFIALIRYTDGELAYILAPQRLAVGDQVVAGNSVDVKPGNAMPLSSMPVGTIIHNVELMPGKGGQIARSAGTYAQLVGRDQGMAILRLNSGEQRLVSGACFASVGAVSNPDHGNINDGKAGRSVWRGKRPHVRGVAMNPVDHPHGGGEGRTSGGRHPVTPWGKPTKGKKTRSNKATDKFIMRSRHQRKK.

The segment at 222–277 (GVAMNPVDHPHGGGEGRTSGGRHPVTPWGKPTKGKKTRSNKATDKFIMRSRHQRKK) is disordered.

This sequence belongs to the universal ribosomal protein uL2 family. As to quaternary structure, part of the 50S ribosomal subunit. Forms a bridge to the 30S subunit in the 70S ribosome.

In terms of biological role, one of the primary rRNA binding proteins. Required for association of the 30S and 50S subunits to form the 70S ribosome, for tRNA binding and peptide bond formation. It has been suggested to have peptidyltransferase activity; this is somewhat controversial. Makes several contacts with the 16S rRNA in the 70S ribosome. The polypeptide is Large ribosomal subunit protein uL2 (Brucella melitensis biotype 1 (strain ATCC 23456 / CCUG 17765 / NCTC 10094 / 16M)).